We begin with the raw amino-acid sequence, 897 residues long: Serine/threonine-protein kinase ATG1 (897 aa).

The Protein kinase domain maps to 24–325 (YTAEKEIGKG…FEEFFANKVV (302 aa)). Residues 30–38 (IGKGSFATV) and Lys54 each bind ATP. Ser34 carries the post-translational modification Phosphoserine. At Thr129 the chain carries Phosphothreonine. Asp172 (proton acceptor) is an active-site residue. Thr226 carries the phosphothreonine; by autocatalysis modification. A phosphoserine mark is found at Ser304, Ser365, and Ser390. Residues 429–432 (YVVV) carry the LIR motif. Positions 490–509 (LLRATSSSSGGSDGSRRPSL) are disordered. Residues Ser508 and Ser515 each carry the phosphoserine; by PKA modification. Phosphoserine occurs at positions 533, 551, and 552. At Thr590 the chain carries Phosphothreonine. Residues Ser621, Ser635, Ser638, Ser647, Ser677, Ser680, Ser683, Ser769, and Ser783 each carry the phosphoserine modification. Residues 880–886 (DSIANRL) are required for Cvt trafficking.

It belongs to the protein kinase superfamily. Ser/Thr protein kinase family. APG1/unc-51/ULK1 subfamily. As to quaternary structure, homodimer. Dimerization requires the presence of ATG13. Forms a ternary complex with ATG13 and ATG17. Also interacts with ATG11. Autophosphorylated at Thr-226 and Ser-390. The phosphorylation state may play a role in the induction of protein degradation upon starvation. Phosphorylation at Thr-226 within the activation loop is required for protein kinase activity whereas phosphorylation at Ser-34 leads to inhibition of kinase activity. Phosphorylation of Ser-508 and Ser-515 by PKA is required to induce autophagy but not for kinase activity.

The protein localises to the cytoplasm. It is found in the preautophagosomal structure membrane. It carries out the reaction L-seryl-[protein] + ATP = O-phospho-L-seryl-[protein] + ADP + H(+). It catalyses the reaction L-threonyl-[protein] + ATP = O-phospho-L-threonyl-[protein] + ADP + H(+). Activated by hypophosphorylated form of ATG13 (present in nitrogen starvation conditions). Also activated by autophopsphorylation of Thr-226 and inhibited by phosphorylation of Ser-34. Functionally, serine/threonine protein kinase involved in the cytoplasm to vacuole transport (Cvt) and found to be essential in autophagy, where it is required for the formation of autophagosomes. Involved in the clearance of protein aggregates which cannot be efficiently cleared by the proteasome. Required for selective autophagic degradation of the nucleus (nucleophagy) as well as for mitophagy which contributes to regulate mitochondrial quantity and quality by eliminating the mitochondria to a basal level to fulfill cellular energy requirements and preventing excess ROS production. Also involved in endoplasmic reticulum-specific autophagic process, in selective removal of ER-associated degradation (ERAD) substrates. Plays a key role in ATG9 and ATG23 cycling through the pre-autophagosomal structure and is necessary to promote ATG18 binding to ATG9 through phosphorylation of ATG9. Catalyzes phosphorylation of ATG4, decreasing the interaction between ATG4 and ATG8 and impairing deconjugation of PE-conjugated forms of ATG8. Finally, ATG1 is also required for the maintenance of cell viability under starvation and for glycogen storage during stationary phase. Plays a role in genome stability through suppression of abnormal mitosis under starvation, and in regulation of filamentous growth. The sequence is that of Serine/threonine-protein kinase ATG1 from Saccharomyces cerevisiae (strain YJM789) (Baker's yeast).